The sequence spans 549 residues: Lipase 3 (549 aa).

Positions M1 to A15 are cleaved as a signal peptide. A disulfide bridge connects residues C75 and C112. The Acyl-ester intermediate role is filled by S224. Residues C283 and C292 are joined by a disulfide bond. A glycan (N-linked (GlcNAc...) asparagine) is linked at N329. The active-site Charge relay system is the E356. A glycan (N-linked (GlcNAc...) asparagine) is linked at N366. H464 acts as the Charge relay system in catalysis.

This sequence belongs to the type-B carboxylesterase/lipase family. As to quaternary structure, monomer and homodimer.

The catalysed reaction is a triacylglycerol + H2O = a diacylglycerol + a fatty acid + H(+). The protein is Lipase 3 (LIP3) of Diutina rugosa (Yeast).